We begin with the raw amino-acid sequence, 85 residues long: MNYLVMISLALLFMTGVESLKDGYIVNDINCTYFCGRNAYCNELCIKLKGESGYCQWASPYGNSCYCYKLPDHVRTKGPGRCNDR.

A signal peptide spans 1–19; sequence MNYLVMISLALLFMTGVES. The region spanning 21–83 is the LCN-type CS-alpha/beta domain; sequence KDGYIVNDIN…VRTKGPGRCN (63 aa). 4 cysteine pairs are disulfide-bonded: C31/C82, C35/C55, C41/C65, and C45/C67. Residue R85 is a propeptide, removed by a carboxypeptidase.

This sequence belongs to the long (4 C-C) scorpion toxin superfamily. Sodium channel inhibitor family. Alpha subfamily. In terms of tissue distribution, expressed by the venom gland.

It localises to the secreted. Its function is as follows. Alpha toxins bind voltage-independently at site-3 of sodium channels (Nav) and inhibit the inactivation of the activated channels, thereby blocking neuronal transmission. The toxin principally slows the inactivation process of TTX-sensitive sodium channels. It discriminates neuronal versus muscular sodium channel, as it is more potent on rat brain Nav1.2/SCN2A (EC(50)=29 nM) than on rat skeletal muscle Nav1.4/SCN4A (EC(50)=416 nM). It also shows a weak activity on Nav1.7/SCN9A (EC(50)=1.76 uM). In vivo, the toxin produces pain hypersensibility to mechanical and thermal stimuli. It also exhibits potent analgesic activity (when injected intraperitoneally), increasing hot plate and tail flick withdrawal latencies in a dose-dependent fashion. This paradoxical analgesic action, is significantly suppressed by opioid receptor antagonists, suggesting a pain-induced analgesia mechanism that involves an endogenous opioid system. This led to hypothesis that pain relief induced by peripheral administration of Amm VIII may result from sensitization of primary afferent neurons and subsequent activation of an opioid-dependent noxious inhibitory control. This is Alpha-toxin Amm8 from Androctonus mauritanicus mauritanicus (Scorpion).